The primary structure comprises 318 residues: tRNA pseudouridine synthase B (318 aa).

Catalysis depends on aspartate 47, which acts as the Nucleophile.

Belongs to the pseudouridine synthase TruB family. Type 1 subfamily.

It catalyses the reaction uridine(55) in tRNA = pseudouridine(55) in tRNA. Its function is as follows. Responsible for synthesis of pseudouridine from uracil-55 in the psi GC loop of transfer RNAs. The polypeptide is tRNA pseudouridine synthase B (Colwellia psychrerythraea (strain 34H / ATCC BAA-681) (Vibrio psychroerythus)).